We begin with the raw amino-acid sequence, 330 residues long: BTB/POZ domain-containing adapter for CUL3-mediated RhoA degradation protein 1 (330 aa).

Positions 1–34 (MSAEASGSSGGHAVTVSGSSPSSSSHVGEEKPGR) are disordered. The 69-residue stretch at 40-108 (KYVKLNVGGT…LRDGTVPLPD (69 aa)) folds into the BTB domain. A compositionally biased stretch (low complexity) spans 282 to 291 (GGVSSSGAGQ). Residues 282-304 (GGVSSSGAGQSEEEGAGAGGGDR) are disordered.

This sequence belongs to the BACURD family.

Its subcellular location is the nucleus. Its function is as follows. Substrate-specific adapter of a BCR (BTB-CUL3-RBX1) E3 ubiquitin-protein ligase complex required for synaptic transmission. The BCR(KCTD13) E3 ubiquitin ligase complex mediates the ubiquitination of RHOA, leading to its degradation by the proteasome, thereby regulating the actin cytoskeleton and promoting synaptic transmission. The protein is BTB/POZ domain-containing adapter for CUL3-mediated RhoA degradation protein 1 of Danio rerio (Zebrafish).